We begin with the raw amino-acid sequence, 314 residues long: Homoserine O-succinyltransferase (314 aa).

The Acyl-thioester intermediate role is filled by cysteine 142. Lysine 163 and serine 192 together coordinate substrate. The active-site Proton acceptor is histidine 235. The active site involves glutamate 237. Arginine 249 is a binding site for substrate.

Belongs to the MetA family.

It localises to the cytoplasm. It catalyses the reaction L-homoserine + succinyl-CoA = O-succinyl-L-homoserine + CoA. The protein operates within amino-acid biosynthesis; L-methionine biosynthesis via de novo pathway; O-succinyl-L-homoserine from L-homoserine: step 1/1. Functionally, transfers a succinyl group from succinyl-CoA to L-homoserine, forming succinyl-L-homoserine. This is Homoserine O-succinyltransferase from Shewanella sediminis (strain HAW-EB3).